Reading from the N-terminus, the 272-residue chain is Ribonuclease 3 (272 aa).

The interval 1–22 is disordered; sequence MSLQFLRSEASDGAGETSDASS. Residues 31–162 form the RNase III domain; that stretch reads TATHLARLTG…LVGAIYLDQG (132 aa). Residue glutamate 75 coordinates Mg(2+). The active site involves aspartate 79. Mg(2+) is bound by residues aspartate 148 and glutamate 151. The active site involves glutamate 151. Positions 189-258 constitute a DRBM domain; that stretch reads NYKSRLIEYT…AKEAMKRLES (70 aa).

This sequence belongs to the ribonuclease III family. As to quaternary structure, homodimer. The cofactor is Mg(2+).

It localises to the cytoplasm. It carries out the reaction Endonucleolytic cleavage to 5'-phosphomonoester.. Its function is as follows. Digests double-stranded RNA. Involved in the processing of primary rRNA transcript to yield the immediate precursors to the large and small rRNAs (23S and 16S). Processes some mRNAs, and tRNAs when they are encoded in the rRNA operon. Processes pre-crRNA and tracrRNA of type II CRISPR loci if present in the organism. In Chlorobaculum tepidum (strain ATCC 49652 / DSM 12025 / NBRC 103806 / TLS) (Chlorobium tepidum), this protein is Ribonuclease 3.